A 189-amino-acid chain; its full sequence is uncharacterized protein (189 aa).

This sequence belongs to the flavoredoxin family. FMN serves as cofactor.

This is an uncharacterized protein from Escherichia coli (strain K12).